Here is a 132-residue protein sequence, read N- to C-terminus: Intraflagellar transport protein 20 homolog A (132 aa).

The stretch at 87-112 (EAQQQQLYALIAEKKMQLERYRIEYD) forms a coiled coil.

Its subcellular location is the golgi apparatus. It localises to the cis-Golgi network. The protein localises to the cytoplasm. The protein resides in the cytoskeleton. It is found in the microtubule organizing center. Its subcellular location is the centrosome. It localises to the centriole. The protein localises to the cell projection. The protein resides in the cilium. Its function is as follows. Involved in ciliary process assembly. May play a role in the trafficking of ciliary membrane proteins from the Golgi complex to the cilium. Regulates the platelet-derived growth factor receptor-alpha (PDGFRA) signaling pathway. Plays an important role in spermatogenesis, particularly spermiogenesis, when germ cells form flagella. This is Intraflagellar transport protein 20 homolog A (ift20-a) from Xenopus laevis (African clawed frog).